A 259-amino-acid polypeptide reads, in one-letter code: Imidazole glycerol phosphate synthase subunit HisF (259 aa).

Active-site residues include Asp-11 and Asp-130.

This sequence belongs to the HisA/HisF family. As to quaternary structure, heterodimer of HisH and HisF.

Its subcellular location is the cytoplasm. It catalyses the reaction 5-[(5-phospho-1-deoxy-D-ribulos-1-ylimino)methylamino]-1-(5-phospho-beta-D-ribosyl)imidazole-4-carboxamide + L-glutamine = D-erythro-1-(imidazol-4-yl)glycerol 3-phosphate + 5-amino-1-(5-phospho-beta-D-ribosyl)imidazole-4-carboxamide + L-glutamate + H(+). It functions in the pathway amino-acid biosynthesis; L-histidine biosynthesis; L-histidine from 5-phospho-alpha-D-ribose 1-diphosphate: step 5/9. Its function is as follows. IGPS catalyzes the conversion of PRFAR and glutamine to IGP, AICAR and glutamate. The HisF subunit catalyzes the cyclization activity that produces IGP and AICAR from PRFAR using the ammonia provided by the HisH subunit. In Acidovorax ebreus (strain TPSY) (Diaphorobacter sp. (strain TPSY)), this protein is Imidazole glycerol phosphate synthase subunit HisF.